The sequence spans 314 residues: Olfactory receptor 10A6 (314 aa).

Over 1–25 (MERQNQSCVVEFILLGFSNYPELQG) the chain is Extracellular. An N-linked (GlcNAc...) asparagine glycan is attached at asparagine 5. A helical membrane pass occupies residues 26–46 (QLFVAFLVIYLVTLIGNAIII). Residues 47 to 54 (VIVSLDQS) are Cytoplasmic-facing. The helical transmembrane segment at 55–75 (LHVPMYLFLLNLSVVDLSFSA) threads the bilayer. At 76–99 (VIMPEMLVVLSTEKTTISFGGCFA) the chain is on the extracellular side. An intrachain disulfide couples cysteine 97 to cysteine 189. Residues 100-120 (QMYFILLFGGAECFLLGAMAY) traverse the membrane as a helical segment. Residues 121-139 (DRFAAICHPLNYQMIMNKG) lie on the Cytoplasmic side of the membrane. A helical transmembrane segment spans residues 140-160 (VFMKLIIFSWALGFMLGTVQT). The Extracellular portion of the chain corresponds to 161-197 (SWVSSFPFCGLNEINHISCETPAVLELACADTFLFEI). Residues 198–217 (YAFTGTFLIILVPFLLILLS) form a helical membrane-spanning segment. Topologically, residues 218-237 (YIRVLFAILKMPSTTGRQKA) are cytoplasmic. A helical membrane pass occupies residues 238-258 (FSTCAAHLTSVTLFYGTASMT). At 259-271 (YLQPKSGYSPETK) the chain is on the extracellular side. A helical transmembrane segment spans residues 272–292 (KVMSLSYSLLTPLLNLLIYSL). The Cytoplasmic portion of the chain corresponds to 293-314 (RNSEMKRALMKLWRRRVVLHTI).

This sequence belongs to the G-protein coupled receptor 1 family.

It is found in the cell membrane. Its function is as follows. Odorant receptor. The polypeptide is Olfactory receptor 10A6 (OR10A6) (Homo sapiens (Human)).